The following is a 94-amino-acid chain: Putative pterin-4-alpha-carbinolamine dehydratase (94 aa).

It belongs to the pterin-4-alpha-carbinolamine dehydratase family.

It catalyses the reaction (4aS,6R)-4a-hydroxy-L-erythro-5,6,7,8-tetrahydrobiopterin = (6R)-L-erythro-6,7-dihydrobiopterin + H2O. The sequence is that of Putative pterin-4-alpha-carbinolamine dehydratase from Mycobacterium leprae (strain Br4923).